The following is a 255-amino-acid chain: Hydroxyacylglutathione hydrolase (255 aa).

Zn(2+) is bound by residues His-59, His-61, Asp-63, His-64, His-118, Asp-144, and His-182.

It belongs to the metallo-beta-lactamase superfamily. Glyoxalase II family. In terms of assembly, monomer. Requires Zn(2+) as cofactor.

The catalysed reaction is an S-(2-hydroxyacyl)glutathione + H2O = a 2-hydroxy carboxylate + glutathione + H(+). Its pathway is secondary metabolite metabolism; methylglyoxal degradation; (R)-lactate from methylglyoxal: step 2/2. Thiolesterase that catalyzes the hydrolysis of S-D-lactoyl-glutathione to form glutathione and D-lactic acid. This chain is Hydroxyacylglutathione hydrolase, found in Synechococcus sp. (strain WH7803).